Reading from the N-terminus, the 325-residue chain is Tagatose 1,6-diphosphate aldolase 1 (325 aa).

It belongs to the aldolase LacD family.

It carries out the reaction D-tagatofuranose 1,6-bisphosphate = D-glyceraldehyde 3-phosphate + dihydroxyacetone phosphate. It functions in the pathway carbohydrate metabolism; D-tagatose 6-phosphate degradation; D-glyceraldehyde 3-phosphate and glycerone phosphate from D-tagatose 6-phosphate: step 2/2. The sequence is that of Tagatose 1,6-diphosphate aldolase 1 (lacD1) from Streptococcus pyogenes serotype M3 (strain SSI-1).